A 289-amino-acid chain; its full sequence is Cytochrome bc1 complex cytochrome c subunit (289 aa).

Residues 1–11 are compositionally biased toward basic residues; the sequence is MKKLGFTRSSR. Positions 1–28 are disordered; it reads MKKLGFTRSSRRCSQPQEREQESERSRR. The chain crosses the membrane as a helical span at residues 37-55; sequence GLLLLVALTVSGGLAAVLT. 2 Cytochrome c domains span residues 69–149 and 170–248; these read ALLR…QANG and TDLG…RTVI. Heme c is bound by residues cysteine 82, cysteine 85, histidine 86, cysteine 183, cysteine 186, and histidine 187. A helical transmembrane segment spans residues 267-287; that stretch reads GMAIWIIGMVTAIGLALWIGA.

The cytochrome bc1 complex is composed of a cytochrome b (QcrB), the Rieske iron-sulfur protein (QcrA) and a diheme cytochrome c (QcrC) subunit. In terms of processing, binds 2 heme c groups covalently per subunit.

The protein localises to the cell membrane. It carries out the reaction a quinol + 2 Fe(III)-[cytochrome c](out) = a quinone + 2 Fe(II)-[cytochrome c](out) + 2 H(+)(out). Functionally, cytochrome b subunit of the cytochrome bc1 complex, an essential component of the respiratory electron transport chain required for ATP synthesis. The bc1 complex catalyzes the oxidation of ubiquinol and the reduction of cytochrome c in the respiratory chain. The bc1 complex operates through a Q-cycle mechanism that couples electron transfer to generation of the proton gradient that drives ATP synthesis. This chain is Cytochrome bc1 complex cytochrome c subunit (qcrC), found in Mycobacterium leprae (strain TN).